A 148-amino-acid chain; its full sequence is SsrA-binding protein (148 aa).

Residues 123 to 148 (KLHDKRETEKKRDWEREKARIMRSAT) form a disordered region. A compositionally biased stretch (basic and acidic residues) spans 126–142 (DKRETEKKRDWEREKAR).

Belongs to the SmpB family.

It localises to the cytoplasm. Functionally, required for rescue of stalled ribosomes mediated by trans-translation. Binds to transfer-messenger RNA (tmRNA), required for stable association of tmRNA with ribosomes. tmRNA and SmpB together mimic tRNA shape, replacing the anticodon stem-loop with SmpB. tmRNA is encoded by the ssrA gene; the 2 termini fold to resemble tRNA(Ala) and it encodes a 'tag peptide', a short internal open reading frame. During trans-translation Ala-aminoacylated tmRNA acts like a tRNA, entering the A-site of stalled ribosomes, displacing the stalled mRNA. The ribosome then switches to translate the ORF on the tmRNA; the nascent peptide is terminated with the 'tag peptide' encoded by the tmRNA and targeted for degradation. The ribosome is freed to recommence translation, which seems to be the essential function of trans-translation. This is SsrA-binding protein from Burkholderia pseudomallei (strain 1710b).